Here is a 156-residue protein sequence, read N- to C-terminus: Ribosomal RNA large subunit methyltransferase H (156 aa).

Residues leucine 73, glycine 104, and isoleucine 123 to leucine 128 each bind S-adenosyl-L-methionine.

This sequence belongs to the RNA methyltransferase RlmH family. Homodimer.

The protein localises to the cytoplasm. The enzyme catalyses pseudouridine(1915) in 23S rRNA + S-adenosyl-L-methionine = N(3)-methylpseudouridine(1915) in 23S rRNA + S-adenosyl-L-homocysteine + H(+). Specifically methylates the pseudouridine at position 1915 (m3Psi1915) in 23S rRNA. The chain is Ribosomal RNA large subunit methyltransferase H from Burkholderia ambifaria (strain MC40-6).